Consider the following 159-residue polypeptide: MADRPQQLQVHPQRGHGHYEGGIKNQRGGGPSAVKVMAVLAALPVGGTLLALAGLTLAGSVIGLLVTSPLFIIFSPVLVPAAIVVGLAVASFLSSGALGLTGLSSLSWVLNYLRCASQSLPREMDQAKRRMQDMAAFVGQKTREVGQEIQSRAQEGRRT.

Residues 1 to 10 show a composition bias toward polar residues; the sequence is MADRPQQLQV. A disordered region spans residues 1 to 24; the sequence is MADRPQQLQVHPQRGHGHYEGGIK. Helical transmembrane passes span 45–65, 70–90, and 92–112; these read VGGTLLALAGLTLAGSVIGLL, LFIIFSPVLVPAAIVVGLAVA, and FLSSGALGLTGLSSLSWVLNY.

It belongs to the oleosin family. As to expression, expressed in seeds.

The protein localises to the lipid droplet. It localises to the membrane. May have a structural role to stabilize the lipid body during desiccation of the seed by preventing coalescence of the oil. Probably interacts with both lipid and phospholipid moieties of lipid bodies. May also provide recognition signals for specific lipase anchorage in lipolysis during seedling growth. This chain is Oleosin Cor a 12, found in Corylus avellana (European hazel).